The chain runs to 360 residues: Phosphoserine aminotransferase (360 aa).

Arginine 41 is a binding site for L-glutamate. Pyridoxal 5'-phosphate contacts are provided by tryptophan 101, threonine 152, aspartate 172, and glutamine 195. At lysine 196 the chain carries N6-(pyridoxal phosphate)lysine. Residue 237 to 238 (NT) coordinates pyridoxal 5'-phosphate.

This sequence belongs to the class-V pyridoxal-phosphate-dependent aminotransferase family. SerC subfamily. In terms of assembly, homodimer. Pyridoxal 5'-phosphate is required as a cofactor.

It localises to the cytoplasm. The catalysed reaction is O-phospho-L-serine + 2-oxoglutarate = 3-phosphooxypyruvate + L-glutamate. The enzyme catalyses 4-(phosphooxy)-L-threonine + 2-oxoglutarate = (R)-3-hydroxy-2-oxo-4-phosphooxybutanoate + L-glutamate. Its pathway is amino-acid biosynthesis; L-serine biosynthesis; L-serine from 3-phospho-D-glycerate: step 2/3. It functions in the pathway cofactor biosynthesis; pyridoxine 5'-phosphate biosynthesis; pyridoxine 5'-phosphate from D-erythrose 4-phosphate: step 3/5. Catalyzes the reversible conversion of 3-phosphohydroxypyruvate to phosphoserine and of 3-hydroxy-2-oxo-4-phosphonooxybutanoate to phosphohydroxythreonine. This chain is Phosphoserine aminotransferase, found in Burkholderia orbicola (strain MC0-3).